The following is a 407-amino-acid chain: Imidazolonepropionase (407 aa).

Fe(3+)-binding residues include His74 and His76. Zn(2+) contacts are provided by His74 and His76. The 4-imidazolone-5-propanoate site is built by Arg83, Tyr146, and His179. Tyr146 contacts N-formimidoyl-L-glutamate. His244 provides a ligand contact to Fe(3+). Position 244 (His244) interacts with Zn(2+). Gln247 is a 4-imidazolone-5-propanoate binding site. A Fe(3+)-binding site is contributed by Asp319. Zn(2+) is bound at residue Asp319. 2 residues coordinate N-formimidoyl-L-glutamate: Asn321 and Gly323. Residue Thr324 participates in 4-imidazolone-5-propanoate binding.

This sequence belongs to the metallo-dependent hydrolases superfamily. HutI family. Zn(2+) serves as cofactor. The cofactor is Fe(3+).

It localises to the cytoplasm. It carries out the reaction 4-imidazolone-5-propanoate + H2O = N-formimidoyl-L-glutamate. It participates in amino-acid degradation; L-histidine degradation into L-glutamate; N-formimidoyl-L-glutamate from L-histidine: step 3/3. Its function is as follows. Catalyzes the hydrolytic cleavage of the carbon-nitrogen bond in imidazolone-5-propanoate to yield N-formimidoyl-L-glutamate. It is the third step in the universal histidine degradation pathway. In Salmonella agona (strain SL483), this protein is Imidazolonepropionase.